The following is a 372-amino-acid chain: uncharacterized protein (372 aa).

S-adenosyl-L-methionine-binding positions include D202 and 227-229; that span reads GDF.

It belongs to the class I-like SAM-binding methyltransferase superfamily. Cation-independent O-methyltransferase family.

This is an uncharacterized protein from Methanocaldococcus jannaschii (strain ATCC 43067 / DSM 2661 / JAL-1 / JCM 10045 / NBRC 100440) (Methanococcus jannaschii).